A 274-amino-acid chain; its full sequence is Probable formate transporter (274 aa).

7 helical membrane passes run 31–51, 62–82, 118–138, 176–196, 200–220, 226–246, and 248–268; these read IVLS…AEVV, AGLV…LVVI, VFNL…TGIL, AFWR…LAIA, IIGK…IGFE, MFFI…FFMN, and LIPV…CLYW.

It belongs to the FNT transporter (TC 1.A.16) family.

The protein resides in the cell membrane. May act as a formate transporter. The polypeptide is Probable formate transporter (fdhC) (Methanothermobacter thermautotrophicus (Methanobacterium thermoformicicum)).